The chain runs to 213 residues: Thymidylate kinase (213 aa).

Residue 10–17 coordinates ATP; that stretch reads GLEGAGKT.

This sequence belongs to the thymidylate kinase family.

It catalyses the reaction dTMP + ATP = dTDP + ADP. Functionally, phosphorylation of dTMP to form dTDP in both de novo and salvage pathways of dTTP synthesis. This chain is Thymidylate kinase, found in Salmonella dublin (strain CT_02021853).